Here is a 419-residue protein sequence, read N- to C-terminus: D-amino acid dehydrogenase (419 aa).

FAD is bound at residue 3–17; that stretch reads VLILGSGVVGVTSAY.

It belongs to the DadA oxidoreductase family. The cofactor is FAD.

It carries out the reaction a D-alpha-amino acid + A + H2O = a 2-oxocarboxylate + AH2 + NH4(+). Its pathway is amino-acid degradation; D-alanine degradation; NH(3) and pyruvate from D-alanine: step 1/1. In terms of biological role, oxidative deamination of D-amino acids. In Chromohalobacter salexigens (strain ATCC BAA-138 / DSM 3043 / CIP 106854 / NCIMB 13768 / 1H11), this protein is D-amino acid dehydrogenase.